Consider the following 84-residue polypeptide: Small ribosomal subunit protein uS17 (84 aa).

The protein belongs to the universal ribosomal protein uS17 family. In terms of assembly, part of the 30S ribosomal subunit.

One of the primary rRNA binding proteins, it binds specifically to the 5'-end of 16S ribosomal RNA. This chain is Small ribosomal subunit protein uS17, found in Ureaplasma parvum serovar 3 (strain ATCC 27815 / 27 / NCTC 11736).